The sequence spans 131 residues: Phosphoribosyl-AMP cyclohydrolase (131 aa).

Asp-78 lines the Mg(2+) pocket. Zn(2+) is bound at residue Cys-79. Mg(2+) contacts are provided by Asp-80 and Asp-82. Zn(2+) is bound by residues Cys-96 and Cys-103.

Belongs to the PRA-CH family. As to quaternary structure, homodimer. It depends on Mg(2+) as a cofactor. The cofactor is Zn(2+).

The protein resides in the cytoplasm. It catalyses the reaction 1-(5-phospho-beta-D-ribosyl)-5'-AMP + H2O = 1-(5-phospho-beta-D-ribosyl)-5-[(5-phospho-beta-D-ribosylamino)methylideneamino]imidazole-4-carboxamide. The protein operates within amino-acid biosynthesis; L-histidine biosynthesis; L-histidine from 5-phospho-alpha-D-ribose 1-diphosphate: step 3/9. Catalyzes the hydrolysis of the adenine ring of phosphoribosyl-AMP. This chain is Phosphoribosyl-AMP cyclohydrolase, found in Neisseria meningitidis serogroup C / serotype 2a (strain ATCC 700532 / DSM 15464 / FAM18).